Here is a 187-residue protein sequence, read N- to C-terminus: 5-formyltetrahydrofolate cyclo-ligase (187 aa).

Residues 6 to 10 (RQQIR), 139 to 146 (GMGGGFYD), and D178 each bind ATP.

The protein belongs to the 5-formyltetrahydrofolate cyclo-ligase family.

It catalyses the reaction (6S)-5-formyl-5,6,7,8-tetrahydrofolate + ATP = (6R)-5,10-methenyltetrahydrofolate + ADP + phosphate. The protein operates within one-carbon metabolism; tetrahydrofolate interconversion. Its function is as follows. Involved in the removal of 5-formyltetrahydrofolate. In vitro, it is a potent inhibitor of various folate-dependent enzymes in the C1 metabolism network and in vivo it might function as a folate storage. 5-formyltetrahydrofolate is also used as an antifolate rescue agent in cancer chemotherapy. Catalyzes the irreversible ATP-dependent transformation of 5-formyltetrahydrofolate (5-CHO-THF) to form 5,10-methenyltetrahydrofolate (5,10-CH=THF). The reverse reaction is catalyzed by the serine hydroxymethyltransferase GlyA (SHMT). This Haemophilus influenzae (strain ATCC 51907 / DSM 11121 / KW20 / Rd) protein is 5-formyltetrahydrofolate cyclo-ligase.